Here is an 846-residue protein sequence, read N- to C-terminus: Translation initiation factor IF-2 (846 aa).

The tr-type G domain maps to 345-512 (SRAPVVTIMG…AVLLQSEVLE (168 aa)). Positions 354 to 361 (GHVDHGKT) are G1. Residue 354–361 (GHVDHGKT) coordinates GTP. Positions 379–383 (GITQH) are G2. Positions 400-403 (DTPG) are G3. GTP is bound by residues 400-404 (DTPGH) and 454-457 (NKID). The segment at 454-457 (NKID) is G4. Residues 490–492 (SAK) form a G5 region.

The protein belongs to the TRAFAC class translation factor GTPase superfamily. Classic translation factor GTPase family. IF-2 subfamily.

Its subcellular location is the cytoplasm. In terms of biological role, one of the essential components for the initiation of protein synthesis. Protects formylmethionyl-tRNA from spontaneous hydrolysis and promotes its binding to the 30S ribosomal subunits. Also involved in the hydrolysis of GTP during the formation of the 70S ribosomal complex. The protein is Translation initiation factor IF-2 of Francisella tularensis subsp. holarctica (strain FTNF002-00 / FTA).